Reading from the N-terminus, the 194-residue chain is Fe/S biogenesis protein NfuA (194 aa).

[4Fe-4S] cluster-binding residues include C152 and C155.

This sequence belongs to the NfuA family. As to quaternary structure, homodimer. [4Fe-4S] cluster is required as a cofactor.

Its function is as follows. Involved in iron-sulfur cluster biogenesis. Binds a 4Fe-4S cluster, can transfer this cluster to apoproteins, and thereby intervenes in the maturation of Fe/S proteins. Could also act as a scaffold/chaperone for damaged Fe/S proteins. The sequence is that of Fe/S biogenesis protein NfuA from Pseudomonas entomophila (strain L48).